The chain runs to 322 residues: Phosphatidylserine decarboxylase proenzyme (322 aa).

Residues D90, H147, and S254 each act as charge relay system; for autoendoproteolytic cleavage activity in the active site. S254 acts as the Schiff-base intermediate with substrate; via pyruvic acid; for decarboxylase activity in catalysis. Pyruvic acid (Ser); by autocatalysis is present on S254. Residues 292–322 are disordered; it reads TPDAEPSPLPAEEIEAEHDASPLVDDKKDQV. The span at 308–322 shows a compositional bias: basic and acidic residues; that stretch reads EHDASPLVDDKKDQV.

It belongs to the phosphatidylserine decarboxylase family. PSD-B subfamily. Prokaryotic type I sub-subfamily. Heterodimer of a large membrane-associated beta subunit and a small pyruvoyl-containing alpha subunit. Requires pyruvate as cofactor. Post-translationally, is synthesized initially as an inactive proenzyme. Formation of the active enzyme involves a self-maturation process in which the active site pyruvoyl group is generated from an internal serine residue via an autocatalytic post-translational modification. Two non-identical subunits are generated from the proenzyme in this reaction, and the pyruvate is formed at the N-terminus of the alpha chain, which is derived from the carboxyl end of the proenzyme. The autoendoproteolytic cleavage occurs by a canonical serine protease mechanism, in which the side chain hydroxyl group of the serine supplies its oxygen atom to form the C-terminus of the beta chain, while the remainder of the serine residue undergoes an oxidative deamination to produce ammonia and the pyruvoyl prosthetic group on the alpha chain. During this reaction, the Ser that is part of the protease active site of the proenzyme becomes the pyruvoyl prosthetic group, which constitutes an essential element of the active site of the mature decarboxylase.

The protein localises to the cell membrane. It catalyses the reaction a 1,2-diacyl-sn-glycero-3-phospho-L-serine + H(+) = a 1,2-diacyl-sn-glycero-3-phosphoethanolamine + CO2. It participates in phospholipid metabolism; phosphatidylethanolamine biosynthesis; phosphatidylethanolamine from CDP-diacylglycerol: step 2/2. Functionally, catalyzes the formation of phosphatidylethanolamine (PtdEtn) from phosphatidylserine (PtdSer). This Escherichia coli O7:K1 (strain IAI39 / ExPEC) protein is Phosphatidylserine decarboxylase proenzyme.